We begin with the raw amino-acid sequence, 278 residues long: Nucleotide-binding protein Tlet_0523 (278 aa).

Residue 9–16 (GLSGAGKS) coordinates ATP. 58-61 (DIRS) contributes to the GTP binding site.

This sequence belongs to the RapZ-like family.

In terms of biological role, displays ATPase and GTPase activities. This is Nucleotide-binding protein Tlet_0523 from Pseudothermotoga lettingae (strain ATCC BAA-301 / DSM 14385 / NBRC 107922 / TMO) (Thermotoga lettingae).